A 349-amino-acid polypeptide reads, in one-letter code: Phenylalanine--tRNA ligase alpha subunit (349 aa).

Mg(2+) is bound at residue Glu258.

The protein belongs to the class-II aminoacyl-tRNA synthetase family. Phe-tRNA synthetase alpha subunit type 1 subfamily. As to quaternary structure, tetramer of two alpha and two beta subunits. Mg(2+) is required as a cofactor.

The protein localises to the cytoplasm. The enzyme catalyses tRNA(Phe) + L-phenylalanine + ATP = L-phenylalanyl-tRNA(Phe) + AMP + diphosphate + H(+). This chain is Phenylalanine--tRNA ligase alpha subunit, found in Rickettsia africae (strain ESF-5).